The primary structure comprises 241 residues: N-acetylmuramoyl-L-alanine amidase Rv3717 (241 aa).

The signal sequence occupies residues 1 to 24; the sequence is MIVGVLVAAATPIISSASATPANI. One can recognise a MurNAc-LAA domain in the interval 29-230; the sequence is VFIDPGHNGA…KYANALVRGV (202 aa). Residue histidine 35 coordinates Zn(2+). A disordered region spans residues 45 to 69; that stretch reads RQVPTGRGGTKNCQASGTSTNSGYP. Polar residues predominate over residues 55–67; the sequence is KNCQASGTSTNSG. Cysteine 57 and cysteine 105 form a disulfide bridge. Zn(2+) contacts are provided by glutamate 70 and histidine 125. Glutamate 200 serves as the catalytic Proton donor/acceptor.

The protein belongs to the N-acetylmuramoyl-L-alanine amidase 3 family. As to quaternary structure, monomer. The cofactor is Zn(2+).

Its subcellular location is the periplasm. The enzyme catalyses Hydrolyzes the link between N-acetylmuramoyl residues and L-amino acid residues in certain cell-wall glycopeptides.. It functions in the pathway cell wall degradation; peptidoglycan degradation. With respect to regulation, the structure reveals a short flexible hairpin turn that partially occludes the active site and may be involved in autoregulation. Cell-wall hydrolase that hydrolyzes the amide bond between N-acetylmuramic acid and L-alanine in cell-wall glycopeptides. Is able to hydrolyze the cell walls of several bacterial species (i.e. Paenibacillus sp., B.avium, E.coli DH5alpha, E.aerogenes, L.acidophilus, B.thuringiensis, B.pumilus, B.subtilis and E.coli W3110), thereby showing that it is a cell-wall hydrolase with broad-spectrum activity. May have a role in peptidoglycan fragment recycling. The protein is N-acetylmuramoyl-L-alanine amidase Rv3717 of Mycobacterium tuberculosis (strain ATCC 25618 / H37Rv).